The primary structure comprises 474 residues: Sulfide dehydrogenase subunit alpha (474 aa).

Residues 1–2 (MP) constitute a propeptide that is removed on maturation. [4Fe-4S] cluster is bound by residues Cys-42, Cys-45, Cys-52, and Cys-56. Cys-101, Cys-107, and Cys-111 together coordinate [3Fe-4S] cluster.

In terms of assembly, heterodimer of alpha and beta subunits. It depends on FAD as a cofactor. [3Fe-4S] cluster is required as a cofactor. Requires [4Fe-4S] cluster as cofactor.

Its subcellular location is the cytoplasm. The enzyme catalyses n sulfur + hydrogen sulfide + NADP(+) = (n+1) sulfur + NADPH. The catalysed reaction is 2 reduced [2Fe-2S]-[ferredoxin] + NADP(+) + H(+) = 2 oxidized [2Fe-2S]-[ferredoxin] + NADPH. In terms of biological role, a bifunctional enzyme that catalyzes the reduction of elemental sulfur or polysulfide to hydrogen sulfide with NADPH as electron donor. Also functions as a reduced ferredoxin:NADP oxidoreductase with a very high affinity for reduced ferredoxin. Exhibits a broad specificity for various physiological and non-physiological substrates with varied reduction potentials such as methyl viologen, benzyl viologen, FAD, FMN, methylene blue, 2,6-dichlorophenolindophenol (DCIP), cytochrome C and ferricyanide with highest preference for benzyl viologen. Does not reduce fumarate, succinate, nitrate, nitrite, sulfate, sulfite or protons. Does not possess any hydrogenase activity or NADPH-dependent glutamate synthase activity. This Pyrococcus furiosus (strain ATCC 43587 / DSM 3638 / JCM 8422 / Vc1) protein is Sulfide dehydrogenase subunit alpha.